We begin with the raw amino-acid sequence, 383 residues long: Beta-1,3-galactosyltransferase 4 (383 aa).

Over 1-8 (MPLSLFRR) the chain is Cytoplasmic. Residues 9–29 (LLLAALLLVIIWTLFGPSGIG) traverse the membrane as a helical segment. At 30–383 (EELLSLSLAS…RCRVIAWLHS (354 aa)) the chain is on the lumenal side. A glycan (N-linked (GlcNAc...) asparagine) is linked at asparagine 149.

This sequence belongs to the glycosyltransferase 31 family.

The protein resides in the golgi apparatus membrane. It catalyses the reaction a ganglioside GM2 (d18:1(4E)) + UDP-alpha-D-galactose = a ganglioside GM1 (d18:1(4E)) + UDP + H(+). The catalysed reaction is a ganglioside GM2 + UDP-alpha-D-galactose = a ganglioside GM1 + UDP + H(+). The enzyme catalyses a ganglioside GD2 (d18:1(4E)) + UDP-alpha-D-galactose = a ganglioside GD1b (d18:1(4E)) + UDP + H(+). It carries out the reaction a ganglioside GA2 (d18:1(4E)) + UDP-alpha-D-galactose = a ganglioside GA1 (d18:1(4E)) + UDP + H(+). It functions in the pathway protein modification; protein glycosylation. In terms of biological role, involved in GM1/GD1B/GA1 ganglioside biosynthesis. In Canis lupus familiaris (Dog), this protein is Beta-1,3-galactosyltransferase 4 (B3GALT4).